A 513-amino-acid chain; its full sequence is Calcium-dependent protein kinase 24 (513 aa).

The tract at residues Met-1–Val-33 is disordered. Residues Tyr-47 to Ile-305 form the Protein kinase domain. Residues Leu-53–Thr-61 and Lys-76 each bind ATP. Asp-171 acts as the Proton acceptor in catalysis. The tract at residues Ala-311–Ile-341 is autoinhibitory domain. 4 consecutive EF-hand domains span residues Glu-348–Glu-383, Leu-384–Leu-419, Glu-420–Asp-455, and His-458–Gly-489. Residues Asp-361, Asp-363, Ser-365, Thr-367, Glu-372, Asp-397, Asp-399, Ser-401, Thr-403, Glu-408, Asp-433, Asp-435, Ser-437, Glu-444, Asp-467, Asn-469, Asp-471, Gln-473, and Glu-478 each contribute to the Ca(2+) site.

Belongs to the protein kinase superfamily. Ser/Thr protein kinase family. CDPK subfamily. Expressed in roots.

The protein resides in the cytoplasm. The catalysed reaction is L-seryl-[protein] + ATP = O-phospho-L-seryl-[protein] + ADP + H(+). The enzyme catalyses L-threonyl-[protein] + ATP = O-phospho-L-threonyl-[protein] + ADP + H(+). With respect to regulation, activated by calcium. Autophosphorylation may play an important role in the regulation of the kinase activity. Its function is as follows. May play a role in signal transduction pathways that involve calcium as a second messenger. Possesses calcium-dependent protein kinase activity in vitro. The chain is Calcium-dependent protein kinase 24 from Oryza sativa subsp. japonica (Rice).